Here is a 238-residue protein sequence, read N- to C-terminus: Ion-translocating oxidoreductase complex subunit E (238 aa).

5 helical membrane passes run 41–61 (LGLG…VSLV), 71–91 (LPAF…LMQA), 95–115 (ELYQ…VILG), 130–150 (SFDG…LGGL), and 184–204 (GFLL…LIAL).

This sequence belongs to the NqrDE/RnfAE family. In terms of assembly, the complex is composed of six subunits: RnfA, RnfB, RnfC, RnfD, RnfE and RnfG.

The protein localises to the cell inner membrane. Functionally, part of a membrane-bound complex that couples electron transfer with translocation of ions across the membrane. This Pseudomonas aeruginosa (strain LESB58) protein is Ion-translocating oxidoreductase complex subunit E.